We begin with the raw amino-acid sequence, 297 residues long: N-acetylmuramic acid 6-phosphate etherase (297 aa).

One can recognise an SIS domain in the interval 56-219; that stretch reads AIEAFNKGGR…STISMIGIGK (164 aa). Glu-84 (proton donor) is an active-site residue. Glu-115 is an active-site residue.

Belongs to the GCKR-like family. MurNAc-6-P etherase subfamily. Homodimer.

The catalysed reaction is N-acetyl-D-muramate 6-phosphate + H2O = N-acetyl-D-glucosamine 6-phosphate + (R)-lactate. The protein operates within amino-sugar metabolism; N-acetylmuramate degradation. In terms of biological role, specifically catalyzes the cleavage of the D-lactyl ether substituent of MurNAc 6-phosphate, producing GlcNAc 6-phosphate and D-lactate. This Lactococcus lactis subsp. cremoris (strain SK11) protein is N-acetylmuramic acid 6-phosphate etherase.